A 61-amino-acid polypeptide reads, in one-letter code: Small ribosomal subunit protein uS14 (61 aa).

Positions 24, 27, 40, and 43 each coordinate Zn(2+).

It belongs to the universal ribosomal protein uS14 family. Zinc-binding uS14 subfamily. Part of the 30S ribosomal subunit. Contacts proteins S3 and S10. The cofactor is Zn(2+).

Binds 16S rRNA, required for the assembly of 30S particles and may also be responsible for determining the conformation of the 16S rRNA at the A site. The chain is Small ribosomal subunit protein uS14 from Desulfitobacterium hafniense (strain Y51).